Here is a 231-residue protein sequence, read N- to C-terminus: Hypoxanthine-guanine-xanthine phosphoribosyltransferase (231 aa).

Residues lysine 77, 144 to 152, lysine 176, and aspartate 204 each bind GMP; that span reads EDIIDTGKT. Aspartate 148 (proton acceptor) is an active-site residue. Aspartate 204 is a binding site for Mg(2+).

Belongs to the purine/pyrimidine phosphoribosyltransferase family. In terms of assembly, homotetramer. Mg(2+) serves as cofactor.

The protein resides in the cytoplasm. The catalysed reaction is IMP + diphosphate = hypoxanthine + 5-phospho-alpha-D-ribose 1-diphosphate. It catalyses the reaction GMP + diphosphate = guanine + 5-phospho-alpha-D-ribose 1-diphosphate. The enzyme catalyses XMP + diphosphate = xanthine + 5-phospho-alpha-D-ribose 1-diphosphate. The protein operates within purine metabolism; GMP biosynthesis via salvage pathway; GMP from guanine: step 1/1. It participates in purine metabolism; IMP biosynthesis via salvage pathway; IMP from hypoxanthine: step 1/1. It functions in the pathway purine metabolism; XMP biosynthesis via salvage pathway; XMP from xanthine: step 1/1. Catalyzes the transfer of a ribosyl phosphate group from 5-phosphoribose 1-diphosphate to the N(9) of hypoxanthine, guanine or xanthine, leading to IMP, GMP and XMP, respectively. Plays a central role in the generation of purine nucleotides through the purine salvage pathway. The protein is Hypoxanthine-guanine-xanthine phosphoribosyltransferase (LACZ) of Plasmodium falciparum (isolate K1 / Thailand).